The sequence spans 559 residues: Urocanate hydratase (559 aa).

NAD(+)-binding positions include 54-55, Gln-132, 178-180, Glu-198, Arg-203, 244-245, 265-269, 275-276, and Tyr-324; these read GG, GMG, NA, QTSAH, and YL. Cys-412 is a catalytic residue. NAD(+) is bound at residue Gly-494.

This sequence belongs to the urocanase family. The cofactor is NAD(+).

It localises to the cytoplasm. It carries out the reaction 4-imidazolone-5-propanoate = trans-urocanate + H2O. Its pathway is amino-acid degradation; L-histidine degradation into L-glutamate; N-formimidoyl-L-glutamate from L-histidine: step 2/3. Functionally, catalyzes the conversion of urocanate to 4-imidazolone-5-propionate. The chain is Urocanate hydratase from Azotobacter vinelandii (strain DJ / ATCC BAA-1303).